The primary structure comprises 329 residues: tRNA (cytidine(32)/guanosine(34)-2'-O)-methyltransferase (329 aa).

S-adenosyl-L-methionine-binding residues include G53, W55, D75, D91, and D116. Residue K156 is the Proton acceptor of the active site. A required for binding to WDR6 region spans residues D221–D240. A Phosphoserine modification is found at S271.

The protein belongs to the class I-like SAM-binding methyltransferase superfamily. RNA methyltransferase RlmE family. TRM7 subfamily. As to quaternary structure, interacts with WDR6; the interaction is direct, and required for 2'-O-methylation of position 34 in substrate tRNAs. Found in fetal brain, lung, liver and kidney. Widely expressed in adult tissue; with high expression in heart and liver, lower expression in skeletal muscle, kidney, and pancreas and also lowly expressed in brain and lung. In the adult brain, expressed in amygdala, caudate nucleus, corpus callosum, hippocampus and thalamus.

It localises to the cytoplasm. It is found in the nucleus. It carries out the reaction cytidine(32)/guanosine(34) in tRNA + 2 S-adenosyl-L-methionine = 2'-O-methylcytidine(32)/2'-O-methylguanosine(34) in tRNA + 2 S-adenosyl-L-homocysteine + 2 H(+). Its activity is regulated as follows. Inhibited by 2,6-diaminopurine (DAP); inhibition promotes UGA stop-codon readthrough during translation by misincorporation of tRNA(Trp) in the nascent polypeptide. Methylates the 2'-O-ribose of nucleotides at positions 32 and 34 of the tRNA anticodon loop of substrate tRNAs. Requisite for faithful cytoplasmic translation. Requires THADA for methylation of the nucleotide at position 32 of the anticodon loop of substrate tRNAs. Requires WDR6 for methylation of the nucleotide at position 34 of the anticodon loop of substrate tRNAs. Promotes translation efficiency of the UUU codon. Plays a role in neurogenesis. Required for expression of genes involved in neurogenesis, mitochondrial translation and energy generation, and lipid biosynthesis. Requisite for RNA-mediated gene silencing. May modify position 32 in tRNA(Arg(ACG)), tRNA(Arg(CCG)), tRNA(Arg(UCG)), tRNA(Cys(GCA)), tRNA(Cys(ACA)), tRNA(Gln(CUG)), tRNA(Gln(UUG)), tRNA(Gly(CCC)), tRNA(Leu(CAG))/tRNA(Leu(CAA)), tRNA(Leu(A/IAG)), tRNA(Leu(UAG)), tRNA(Phe(GAA)), tRNA(Pro(AGG))/tRNA(Pro(CGG))/tRNA(Pro(UGG)) and tRNA(Trp(CCA)), and position 34 in tRNA(Phe(GAA)), tRNA(Leu(CAA)), tRNA(Sec(UCA)), and tRNA(Trp(CCA)). This Homo sapiens (Human) protein is tRNA (cytidine(32)/guanosine(34)-2'-O)-methyltransferase.